A 45-amino-acid chain; its full sequence is Cytochrome b559 subunit beta (45 aa).

A helical membrane pass occupies residues tryptophan 20–alanine 36. A heme-binding site is contributed by histidine 24.

Belongs to the PsbE/PsbF family. In terms of assembly, heterodimer of an alpha subunit and a beta subunit. PSII is composed of 1 copy each of membrane proteins PsbA, PsbB, PsbC, PsbD, PsbE, PsbF, PsbH, PsbI, PsbJ, PsbK, PsbL, PsbM, PsbT, PsbX, PsbY, PsbZ, Psb30/Ycf12, peripheral proteins PsbO, CyanoQ (PsbQ), PsbU, PsbV and a large number of cofactors. It forms dimeric complexes. Heme b serves as cofactor.

The protein localises to the cellular thylakoid membrane. This b-type cytochrome is tightly associated with the reaction center of photosystem II (PSII). PSII is a light-driven water:plastoquinone oxidoreductase that uses light energy to abstract electrons from H(2)O, generating O(2) and a proton gradient subsequently used for ATP formation. It consists of a core antenna complex that captures photons, and an electron transfer chain that converts photonic excitation into a charge separation. This chain is Cytochrome b559 subunit beta, found in Nostoc sp. (strain PCC 7120 / SAG 25.82 / UTEX 2576).